The primary structure comprises 244 residues: Protein-lysine methyltransferase METTL21E (244 aa).

A disordered region spans residues methionine 1–aspartate 20. Basic and acidic residues predominate over residues threonine 9–arginine 18. Residues tryptophan 69, glycine 97–glycine 99, aspartate 118, tryptophan 149, and alanine 170 contribute to the S-adenosyl-L-methionine site.

Belongs to the methyltransferase superfamily. METTL21 family.

In terms of biological role, protein-lysine methyltransferase. This is Protein-lysine methyltransferase METTL21E (Mettl21e) from Mus musculus (Mouse).